The sequence spans 490 residues: UDP-N-acetylmuramate--L-alanine ligase (490 aa).

126 to 132 is a binding site for ATP; it reads GTHGKTT.

It belongs to the MurCDEF family.

It is found in the cytoplasm. The enzyme catalyses UDP-N-acetyl-alpha-D-muramate + L-alanine + ATP = UDP-N-acetyl-alpha-D-muramoyl-L-alanine + ADP + phosphate + H(+). The protein operates within cell wall biogenesis; peptidoglycan biosynthesis. Functionally, cell wall formation. The chain is UDP-N-acetylmuramate--L-alanine ligase from Sodalis glossinidius (strain morsitans).